Reading from the N-terminus, the 183-residue chain is Dual-action ribosomal maturation protein DarP (183 aa).

Belongs to the DarP family.

It is found in the cytoplasm. Its function is as follows. Member of a network of 50S ribosomal subunit biogenesis factors which assembles along the 30S-50S interface, preventing incorrect 23S rRNA structures from forming. Promotes peptidyl transferase center (PTC) maturation. This is Dual-action ribosomal maturation protein DarP from Shigella flexneri.